The following is a 725-amino-acid chain: Phosphoribosylformylglycinamidine synthase subunit PurL (725 aa).

H42 is an active-site residue. Residues Y45 and K84 each contribute to the ATP site. Mg(2+) is bound at residue E86. Substrate contacts are provided by residues 87–90 (SHNH) and R109. H88 functions as the Proton acceptor in the catalytic mechanism. D110 contacts Mg(2+). Residue Q237 coordinates substrate. Position 265 (D265) interacts with Mg(2+). Residue 309-311 (ESQ) coordinates substrate. D491 and G528 together coordinate ATP. N529 serves as a coordination point for Mg(2+). Residue S531 participates in substrate binding.

The protein belongs to the FGAMS family. Monomer. Part of the FGAM synthase complex composed of 1 PurL, 1 PurQ and 2 PurS subunits.

It is found in the cytoplasm. The catalysed reaction is N(2)-formyl-N(1)-(5-phospho-beta-D-ribosyl)glycinamide + L-glutamine + ATP + H2O = 2-formamido-N(1)-(5-O-phospho-beta-D-ribosyl)acetamidine + L-glutamate + ADP + phosphate + H(+). The protein operates within purine metabolism; IMP biosynthesis via de novo pathway; 5-amino-1-(5-phospho-D-ribosyl)imidazole from N(2)-formyl-N(1)-(5-phospho-D-ribosyl)glycinamide: step 1/2. Its function is as follows. Part of the phosphoribosylformylglycinamidine synthase complex involved in the purines biosynthetic pathway. Catalyzes the ATP-dependent conversion of formylglycinamide ribonucleotide (FGAR) and glutamine to yield formylglycinamidine ribonucleotide (FGAM) and glutamate. The FGAM synthase complex is composed of three subunits. PurQ produces an ammonia molecule by converting glutamine to glutamate. PurL transfers the ammonia molecule to FGAR to form FGAM in an ATP-dependent manner. PurS interacts with PurQ and PurL and is thought to assist in the transfer of the ammonia molecule from PurQ to PurL. This is Phosphoribosylformylglycinamidine synthase subunit PurL from Campylobacter lari (strain RM2100 / D67 / ATCC BAA-1060).